Here is a 152-residue protein sequence, read N- to C-terminus: Deoxyuridine 5'-triphosphate nucleotidohydrolase (152 aa).

Residues 71–73, Asn84, 88–90, and Met98 each bind substrate; these read RSG and LID.

Belongs to the dUTPase family. Requires Mg(2+) as cofactor.

It carries out the reaction dUTP + H2O = dUMP + diphosphate + H(+). The protein operates within pyrimidine metabolism; dUMP biosynthesis; dUMP from dCTP (dUTP route): step 2/2. Its function is as follows. This enzyme is involved in nucleotide metabolism: it produces dUMP, the immediate precursor of thymidine nucleotides and it decreases the intracellular concentration of dUTP so that uracil cannot be incorporated into DNA. The sequence is that of Deoxyuridine 5'-triphosphate nucleotidohydrolase from Klebsiella pneumoniae (strain 342).